Reading from the N-terminus, the 738-residue chain is MIGNDRWVTEIETGPVTEARPDTNAREPGDRTPAAPPAATPAATTDQLPEDRYLNRELSWLEFNARVLALAADDSMPLLERAKFLAIFASNLDEFYMVRVAGLKRRDQMGLSALSADGLTPREQLGRIGEQTQRIASRHARVFRDSVLPALGEEGIYVVTWADLDQAEREQLSTYFHEQVFPVLTPLAVDPAHPFPFVSGLSLNLAVTVRQPEDGGQHFARVKVPDNVDRFVELGGTDTDGAEGAAVHRFLPVEELIAAFLPVLFPGMEIVEHHAFRITRNADFEVEEDRDEDLLQALERELARRRFGSPVRLEVADDMTEGMLELLLRELDVHPGDVIEVPGLLDLSSLWQIYGLDRPALKDRTFVPATHPAFAERETPKSIFATLREGDVLVHHPYYSFSTSVQRFIEQAAADPNVLAIKQTLYRTSGDSPIVRALIDAAEAGKQVVALVEIKARFDEQANIRWARALEQAGVHVAYGIVGLKTHCKTALVVRREGPVIRRYCHIGTGNYNSKTARLYEDVGLLTAAPDIGADLTDLFNSLTGYSRKLSYRNLLVAPHGIRAGIIERVEREVAAHLEHGPQAGKGHIRLKMNALVDEQVIDALYRASQVGVRIEVVVRGICALRPGAEGFSENITARSILGRFLEHSRILHFRAIDEFWIGSADMMHRNLDRRVEVMAQVKDPRLTAQLDDLFESALDPATRCWELGPDGQWTASPQEGRTVRDHQVSLMERHRSP.

Residues 1–48 (MIGNDRWVTEIETGPVTEARPDTNAREPGDRTPAAPPAATPAATTDQL) are disordered. The span at 19–30 (ARPDTNAREPGD) shows a compositional bias: basic and acidic residues. N91 contributes to the ATP binding site. Residues R427 and R457 each contribute to the Mg(2+) site. H487 acts as the Phosphohistidine intermediate in catalysis. Positions 520, 620, and 648 each coordinate ATP.

This sequence belongs to the polyphosphate kinase 1 (PPK1) family. It depends on Mg(2+) as a cofactor. Post-translationally, an intermediate of this reaction is the autophosphorylated ppk in which a phosphate is covalently linked to a histidine residue through a N-P bond.

It carries out the reaction [phosphate](n) + ATP = [phosphate](n+1) + ADP. Functionally, catalyzes the reversible transfer of the terminal phosphate of ATP to form a long-chain polyphosphate (polyP). The polypeptide is Polyphosphate kinase (Mycobacterium marinum (strain ATCC BAA-535 / M)).